Reading from the N-terminus, the 1405-residue chain is DNA-directed RNA polymerase subunit beta' (1405 aa).

4 residues coordinate Zn(2+): Cys-70, Cys-72, Cys-85, and Cys-88. Asp-460, Asp-462, and Asp-464 together coordinate Mg(2+). The Zn(2+) site is built by Cys-814, Cys-888, Cys-895, and Cys-898.

This sequence belongs to the RNA polymerase beta' chain family. In terms of assembly, the RNAP catalytic core consists of 2 alpha, 1 beta, 1 beta' and 1 omega subunit. When a sigma factor is associated with the core the holoenzyme is formed, which can initiate transcription. The cofactor is Mg(2+). It depends on Zn(2+) as a cofactor.

The enzyme catalyses RNA(n) + a ribonucleoside 5'-triphosphate = RNA(n+1) + diphosphate. In terms of biological role, DNA-dependent RNA polymerase catalyzes the transcription of DNA into RNA using the four ribonucleoside triphosphates as substrates. This chain is DNA-directed RNA polymerase subunit beta', found in Wigglesworthia glossinidia brevipalpis.